The primary structure comprises 684 residues: Glycine--tRNA ligase beta subunit (684 aa).

It belongs to the class-II aminoacyl-tRNA synthetase family. As to quaternary structure, tetramer of two alpha and two beta subunits.

It is found in the cytoplasm. The enzyme catalyses tRNA(Gly) + glycine + ATP = glycyl-tRNA(Gly) + AMP + diphosphate. In Pseudomonas aeruginosa (strain ATCC 15692 / DSM 22644 / CIP 104116 / JCM 14847 / LMG 12228 / 1C / PRS 101 / PAO1), this protein is Glycine--tRNA ligase beta subunit.